Reading from the N-terminus, the 403-residue chain is MFACDELLLNASTIDATGLQLSNQAIVIKKGRIEWCGSEDQLPAHFQESAKSRKDCHGQLITPGLIDCHTHLVYAGHRAAEFRLKLQGVSYADIAKSGGGILSTVQMTRDASEEELIDQSLPRLLALKNEGVTTVEIKSGYGLDLQNELKMLKVARQLGEMAGVRVKTTFLGAHAVGPEFKGNSQAYVDFLCNEMLPAAKNMDLVDTVDVFCESIAFSIRQAEQIFQAAKDLNLPIKCHAEQLSNMGASSLAARYGALSCDHLEFLDENGALNMVKANTVAVLLPGAFYFLKEKQKPPVDLLRQVGVGMAIATDSNPGSSPTTSLLLMMSMACQFFSMSIPEVLSAVTYQASRALGMEKDIGSIEAGKIADLVLWSIKDSAALCYYFAYPLPHQTMVAGEWVS.

Positions 69 and 71 each coordinate Fe(3+). 2 residues coordinate Zn(2+): H69 and H71. Positions 78, 141, and 174 each coordinate 4-imidazolone-5-propanoate. Y141 lines the N-formimidoyl-L-glutamate pocket. H239 contacts Fe(3+). H239 is a binding site for Zn(2+). Q242 is a binding site for 4-imidazolone-5-propanoate. D314 provides a ligand contact to Fe(3+). Residue D314 coordinates Zn(2+). Residues N316 and G318 each coordinate N-formimidoyl-L-glutamate. S319 lines the 4-imidazolone-5-propanoate pocket.

This sequence belongs to the metallo-dependent hydrolases superfamily. HutI family. The cofactor is Zn(2+). Fe(3+) is required as a cofactor.

The protein resides in the cytoplasm. It catalyses the reaction 4-imidazolone-5-propanoate + H2O = N-formimidoyl-L-glutamate. It functions in the pathway amino-acid degradation; L-histidine degradation into L-glutamate; N-formimidoyl-L-glutamate from L-histidine: step 3/3. In terms of biological role, catalyzes the hydrolytic cleavage of the carbon-nitrogen bond in imidazolone-5-propanoate to yield N-formimidoyl-L-glutamate. It is the third step in the universal histidine degradation pathway. In Legionella pneumophila (strain Corby), this protein is Imidazolonepropionase.